The sequence spans 458 residues: O-acyltransferase WSD (458 aa).

The Proton acceptor role is filled by histidine 133.

It belongs to the long-chain O-acyltransferase family.

The catalysed reaction is a long chain fatty alcohol + a fatty acyl-CoA = a wax ester + CoA. The enzyme catalyses an acyl-CoA + a 1,2-diacyl-sn-glycerol = a triacyl-sn-glycerol + CoA. It functions in the pathway glycerolipid metabolism; triacylglycerol biosynthesis. Its function is as follows. Bifunctional wax ester synthase/diacylglycerol acyltransferase (WS and DGAT). Catalyzes the terminal and only committed step in triacylglycerol synthesis by using diacylglycerol and fatty acyl CoA as substrates. Required for storage lipid synthesis. WS uses C(12)-CoA to C(18)-CoA substrates whereas DGAT prefers C(20)-CoA. Upon expression in E.coli and Pseudomonas citronellolis (DSM 50332) both WS and DGAT activities increase. The chain is O-acyltransferase WSD (wax-dgaT) from Acinetobacter baylyi (strain ATCC 33305 / BD413 / ADP1).